A 123-amino-acid polypeptide reads, in one-letter code: Holo-[acyl-carrier-protein] synthase (123 aa).

Mg(2+) is bound by residues Asp-7 and Glu-56.

It belongs to the P-Pant transferase superfamily. AcpS family. It depends on Mg(2+) as a cofactor.

Its subcellular location is the cytoplasm. The enzyme catalyses apo-[ACP] + CoA = holo-[ACP] + adenosine 3',5'-bisphosphate + H(+). In terms of biological role, transfers the 4'-phosphopantetheine moiety from coenzyme A to a Ser of acyl-carrier-protein. The chain is Holo-[acyl-carrier-protein] synthase from Carboxydothermus hydrogenoformans (strain ATCC BAA-161 / DSM 6008 / Z-2901).